Reading from the N-terminus, the 118-residue chain is Large ribosomal subunit protein uL18 (118 aa).

The tract at residues 1–25 is disordered; it reads MISKPDKNKIRQKRHRRVRGKLSGT. Residues 10-20 show a composition bias toward basic residues; the sequence is IRQKRHRRVRG.

Belongs to the universal ribosomal protein uL18 family. Part of the 50S ribosomal subunit; part of the 5S rRNA/L5/L18/L25 subcomplex. Contacts the 5S and 23S rRNAs.

Functionally, this is one of the proteins that bind and probably mediate the attachment of the 5S RNA into the large ribosomal subunit, where it forms part of the central protuberance. This is Large ribosomal subunit protein uL18 from Streptococcus pyogenes serotype M5 (strain Manfredo).